The primary structure comprises 250 residues: 2,3-bisphosphoglycerate-dependent phosphoglycerate mutase (250 aa).

Residues 10–17 (RHGESQWN), 23–24 (TG), Arg62, 89–92 (ERHY), Lys100, 116–117 (RR), and 185–186 (GN) each bind substrate. His11 serves as the catalytic Tele-phosphohistidine intermediate. Glu89 functions as the Proton donor/acceptor in the catalytic mechanism.

Belongs to the phosphoglycerate mutase family. BPG-dependent PGAM subfamily. In terms of assembly, homodimer.

It carries out the reaction (2R)-2-phosphoglycerate = (2R)-3-phosphoglycerate. It participates in carbohydrate degradation; glycolysis; pyruvate from D-glyceraldehyde 3-phosphate: step 3/5. Functionally, catalyzes the interconversion of 2-phosphoglycerate and 3-phosphoglycerate. This chain is 2,3-bisphosphoglycerate-dependent phosphoglycerate mutase, found in Sodalis glossinidius (strain morsitans).